A 247-amino-acid polypeptide reads, in one-letter code: Protein GrpE (247 aa).

A compositionally biased stretch (basic and acidic residues) spans 31 to 49 (QKEETKTTNKDNQKEDETV). A disordered region spans residues 31–79 (QKEETKTTNKDNQKEDETVKNQSNQSNQSNQTKQTNTKQQKHQPKENSH). The segment covering 50-68 (KNQSNQSNQSNQTKQTNTK) has biased composition (low complexity).

It belongs to the GrpE family. Homodimer.

It is found in the cytoplasm. Participates actively in the response to hyperosmotic and heat shock by preventing the aggregation of stress-denatured proteins, in association with DnaK and GrpE. It is the nucleotide exchange factor for DnaK and may function as a thermosensor. Unfolded proteins bind initially to DnaJ; upon interaction with the DnaJ-bound protein, DnaK hydrolyzes its bound ATP, resulting in the formation of a stable complex. GrpE releases ADP from DnaK; ATP binding to DnaK triggers the release of the substrate protein, thus completing the reaction cycle. Several rounds of ATP-dependent interactions between DnaJ, DnaK and GrpE are required for fully efficient folding. This is Protein GrpE from Onion yellows phytoplasma (strain OY-M).